A 236-amino-acid chain; its full sequence is 2-C-methyl-D-erythritol 4-phosphate cytidylyltransferase (236 aa).

This sequence belongs to the IspD/TarI cytidylyltransferase family. IspD subfamily. As to quaternary structure, homodimer.

The enzyme catalyses 2-C-methyl-D-erythritol 4-phosphate + CTP + H(+) = 4-CDP-2-C-methyl-D-erythritol + diphosphate. The protein operates within isoprenoid biosynthesis; isopentenyl diphosphate biosynthesis via DXP pathway; isopentenyl diphosphate from 1-deoxy-D-xylulose 5-phosphate: step 2/6. In terms of biological role, catalyzes the formation of 4-diphosphocytidyl-2-C-methyl-D-erythritol from CTP and 2-C-methyl-D-erythritol 4-phosphate (MEP). In Buchnera aphidicola subsp. Schizaphis graminum (strain Sg), this protein is 2-C-methyl-D-erythritol 4-phosphate cytidylyltransferase.